The primary structure comprises 466 residues: UDP-N-acetylmuramate--L-alanine ligase (466 aa).

114 to 120 (GTHGKTT) is a binding site for ATP.

The protein belongs to the MurCDEF family.

Its subcellular location is the cytoplasm. The enzyme catalyses UDP-N-acetyl-alpha-D-muramate + L-alanine + ATP = UDP-N-acetyl-alpha-D-muramoyl-L-alanine + ADP + phosphate + H(+). It participates in cell wall biogenesis; peptidoglycan biosynthesis. In terms of biological role, cell wall formation. The sequence is that of UDP-N-acetylmuramate--L-alanine ligase from Mesorhizobium japonicum (strain LMG 29417 / CECT 9101 / MAFF 303099) (Mesorhizobium loti (strain MAFF 303099)).